Consider the following 190-residue polypeptide: Riboflavin transporter FmnP (190 aa).

Topologically, residues 1-5 are extracellular; sequence MKVKK. Residues 6-26 form a helical membrane-spanning segment; sequence LVVVSMLSSIAFVLMLLNFPF. The Cytoplasmic segment spans residues 27 to 39; that stretch reads PGLPDYLKIDFSD. A helical transmembrane segment spans residues 40–60; that stretch reads VPAIIAILIYGPLAGIAVEAI. The Extracellular segment spans residues 61-76; it reads KNVLQYIIQGSMAGVP. The helical transmembrane segment at 77–97 threads the bilayer; it reads VGQVANFIAGTLFILPTAFLF. Topologically, residues 98–109 are cytoplasmic; sequence KKLNSAKGLAVS. The helical transmembrane segment at 110–130 threads the bilayer; sequence LLLGTAAMTILMSILNYVLIL. Residues 131–154 lie on the Extracellular side of the membrane; the sequence is PAYTWFLHSPALSDSALKTAVVAG. A helical membrane pass occupies residues 155-175; sequence ILPFNMIKGIVITVVFSLIFI. The Cytoplasmic portion of the chain corresponds to 176 to 190; it reads KLKPWIEQQRSAHIH.

Belongs to the prokaryotic riboflavin transporter (P-RFT) (TC 2.A.87) family. In terms of assembly, forms a stable energy-coupling factor (ECF) transporter complex composed of a membrane-embedded substrate-binding protein (S component), 2 ATP-binding proteins (A component) and 2 transmembrane proteins (T component). May be able to interact with more than 1 S component at a time.

It localises to the cell membrane. With respect to regulation, inhibited by excess of riboflavin or FMN. Also inhibited by protonophores such as CCCP and FCCP or in the absence of glucose. In terms of biological role, mediates uptake of riboflavin and roseoflavin, a toxic riboflavin analog; may also transport FMN. Probably a riboflavin-binding protein that interacts with the energy-coupling factor (ECF) ABC-transporter complex. Unlike classic ABC transporters this ECF transporter provides the energy necessary to transport a number of different substrates. The substrates themselves are bound by transmembrane, not extracytoplasmic soluble proteins. The chain is Riboflavin transporter FmnP (fmnP) from Bacillus subtilis (strain 168).